The chain runs to 265 residues: Mlc titration factor A (265 aa).

Positions 111, 148, 152, and 211 each coordinate Zn(2+).

Belongs to the MtfA family. In terms of assembly, interacts with Mlc. Zn(2+) serves as cofactor.

The protein resides in the cytoplasm. Its function is as follows. Involved in the modulation of the activity of the glucose-phosphotransferase system (glucose-PTS). Interacts with the transcriptional repressor Mlc, preventing its interaction with DNA and leading to the modulation of expression of genes regulated by Mlc, including ptsG, which encodes the PTS system glucose-specific EIICB component. Shows zinc-dependent metallopeptidase activity. The sequence is that of Mlc titration factor A from Escherichia coli O8 (strain IAI1).